The following is a 1372-amino-acid chain: DNA-directed RNA polymerase subunit beta (1372 aa).

It belongs to the RNA polymerase beta chain family. As to quaternary structure, the RNAP catalytic core consists of 2 alpha, 1 beta, 1 beta' and 1 omega subunit. When a sigma factor is associated with the core the holoenzyme is formed, which can initiate transcription.

The enzyme catalyses RNA(n) + a ribonucleoside 5'-triphosphate = RNA(n+1) + diphosphate. Functionally, DNA-dependent RNA polymerase catalyzes the transcription of DNA into RNA using the four ribonucleoside triphosphates as substrates. This is DNA-directed RNA polymerase subunit beta from Psychrobacter arcticus (strain DSM 17307 / VKM B-2377 / 273-4).